The sequence spans 565 residues: Deformed epidermal autoregulatory factor 1 homolog (565 aa).

Disordered regions lie at residues 29 to 62 (AAAA…ETRR) and 162 to 189 (GLKG…EKGG). Residues 169–181 (PLTPGPQSPPTPL) are compositionally biased toward pro residues. T171 carries the phosphothreonine modification. S176 is subject to Phosphoserine. At T179 the chain carries Phosphothreonine. An SAND domain is found at 193 to 273 (NWDPSVYDSE…QCLIQDGILN (81 aa)). A Nuclear localization signal motif is present at residues 301–316 (KRRKKENELPTTPVKK). The tract at residues 403–478 (IAPFPEAALP…QLKTLFEQAK (76 aa)) is interaction with LMO4. T432 bears the Phosphothreonine mark. 2 positions are modified to phosphoserine: S443 and S448. Zn(2+) is bound by residues C504, C507, C515, C518, C524, C528, H536, and C540. An MYND-type zinc finger spans residues 504 to 540 (CVNCGREAMSECTGCHKVNYCSTFCQRKDWKDHQHVC).

Homodimer. Interacts with LMO4; LMO4 blocks export from nucleus. Interacts with LMO2 and CLIM2. May interact with the corepressors NCOR1 and NCRO2. Identified in a complex with XRCC5 and XRCC6. Interacts (via the SAND domain) with the DNA-PK complex subunit XRCC6; the interaction is direct and may be inhibited by DNA-binding. May be phosphorylated by DNA-PK complex in a DNA independent manner (in vitro). As to expression, ubiquitous. Detected in brain, spleen, adrenal, lung, skeletal muscle, liver, kidney, and in developing germ cells in testis. In pituitary, restricted to hormone-secreting cell types.

The protein resides in the nucleus. It localises to the secreted. Its function is as follows. Transcription factor that binds to sequence with multiple copies of 5'-TTC[CG]G-3' present in its own promoter and that of the HNRPA2B1 gene. Down-regulates transcription of these genes. Binds to the retinoic acid response element (RARE) 5'-AGGGTTCACCGAAAGTTCA-3'. Activates the proenkephalin gene independently of promoter binding, probably through protein-protein interaction. When secreted, behaves as an inhibitor of cell proliferation, by arresting cells in the G0 or G1 phase. Regulates epithelial cell proliferation and side-branching in the mammary gland. Required for neural tube closure and skeletal patterning. Controls the expression of peripheral tissue antigens in pancreatic lymph nodes. Transcriptional activator of EIF4G3. May also involved in behavior. The protein is Deformed epidermal autoregulatory factor 1 homolog (Deaf1) of Rattus norvegicus (Rat).